We begin with the raw amino-acid sequence, 261 residues long: Precorrin-6A reductase (261 aa).

The protein belongs to the precorrin-6x reductase family.

The enzyme catalyses precorrin-6B + NADP(+) = precorrin-6A + NADPH + 2 H(+). It participates in cofactor biosynthesis; adenosylcobalamin biosynthesis; cob(II)yrinate a,c-diamide from precorrin-2 (aerobic route): step 6/10. Functionally, catalyzes the reduction of the macrocycle of precorrin-6X into precorrin-6Y. In Sinorhizobium sp, this protein is Precorrin-6A reductase (cobK).